Reading from the N-terminus, the 107-residue chain is uncharacterized protein (107 aa).

The segment at 1–32 (MDSLASGRWRRRRTEELPAAGDAKRACRRSEP) is disordered. The segment covering 22 to 31 (DAKRACRRSE) has biased composition (basic and acidic residues).

This is an uncharacterized protein from Mus musculus (Mouse).